Consider the following 287-residue polypeptide: Endolytic peptidoglycan transglycosylase RlpA (287 aa).

Positions 1–25 are cleaved as a signal peptide; sequence MKLKTGLNLTALLLFMISVAFPAQA. Positions 209-284 constitute an SPOR domain; sequence LKGTEFYCLK…ANNKPLIVYT (76 aa).

This sequence belongs to the RlpA family.

In terms of biological role, lytic transglycosylase with a strong preference for naked glycan strands that lack stem peptides. The protein is Endolytic peptidoglycan transglycosylase RlpA of Haemophilus influenzae (strain ATCC 51907 / DSM 11121 / KW20 / Rd).